A 296-amino-acid polypeptide reads, in one-letter code: Bifunctional protein FolD (296 aa).

Residues 166 to 168 (GRS), Ser191, and Ile232 each bind NADP(+).

The protein belongs to the tetrahydrofolate dehydrogenase/cyclohydrolase family. Homodimer.

It catalyses the reaction (6R)-5,10-methylene-5,6,7,8-tetrahydrofolate + NADP(+) = (6R)-5,10-methenyltetrahydrofolate + NADPH. The catalysed reaction is (6R)-5,10-methenyltetrahydrofolate + H2O = (6R)-10-formyltetrahydrofolate + H(+). It functions in the pathway one-carbon metabolism; tetrahydrofolate interconversion. In terms of biological role, catalyzes the oxidation of 5,10-methylenetetrahydrofolate to 5,10-methenyltetrahydrofolate and then the hydrolysis of 5,10-methenyltetrahydrofolate to 10-formyltetrahydrofolate. In Cereibacter sphaeroides (strain ATCC 17025 / ATH 2.4.3) (Rhodobacter sphaeroides), this protein is Bifunctional protein FolD.